An 889-amino-acid chain; its full sequence is A disintegrin and metalloproteinase with thrombospondin motifs 8 (889 aa).

The first 26 residues, methionine 1–glycine 26, serve as a signal peptide directing secretion. Residues alanine 27 to arginine 213 constitute a propeptide that is removed on maturation. The tract at residues glutamine 138 to arginine 210 is disordered. Over residues glutamate 173–glutamine 183 the composition is skewed to basic and acidic residues. The span at glutamate 184 to glycine 197 shows a compositional bias: acidic residues. One can recognise a Peptidase M12B domain in the interval arginine 219–proline 429. Disulfide bonds link cysteine 294-cysteine 347, cysteine 323-cysteine 329, cysteine 341-cysteine 424, cysteine 379-cysteine 408, cysteine 452-cysteine 477, cysteine 463-cysteine 486, cysteine 472-cysteine 507, cysteine 501-cysteine 512, cysteine 538-cysteine 575, cysteine 542-cysteine 580, and cysteine 553-cysteine 565. N-linked (GlcNAc...) asparagine glycosylation occurs at asparagine 344. Histidine 363 provides a ligand contact to Zn(2+). Glutamate 364 is an active-site residue. 2 residues coordinate Zn(2+): histidine 367 and histidine 373. Residues asparagine 400, asparagine 465, and asparagine 490 are each glycosylated (N-linked (GlcNAc...) asparagine). Residues glycine 438–alanine 525 enclose the Disintegrin domain. Residues aspartate 526–proline 581 form the TSP type-1 1 domain. A glycan (N-linked (GlcNAc...) asparagine) is linked at asparagine 599. The interval arginine 690 to leucine 831 is spacer. The TSP type-1 2 domain maps to histidine 833–proline 888.

Zn(2+) serves as cofactor. Post-translationally, the precursor is cleaved by a furin endopeptidase. Glycosylated. Can be O-fucosylated by POFUT2 on a serine or a threonine residue found within the consensus sequence C1-X(2)-(S/T)-C2-G of the TSP type-1 repeat domains where C1 and C2 are the first and second cysteine residue of the repeat, respectively. Fucosylated repeats can then be further glycosylated by the addition of a beta-1,3-glucose residue by the glucosyltransferase, B3GALTL. Fucosylation mediates the efficient secretion of ADAMTS family members. Can also be C-glycosylated with one or two mannose molecules on tryptophan residues within the consensus sequence W-X-X-W of the TPRs, and N-glycosylated. These other glycosylations can also facilitate secretion. Highly expressed in adult and fetal lung, lower expression in brain, placenta, heart, stomach and fetal brain and kidney.

The protein resides in the secreted. Its subcellular location is the extracellular space. The protein localises to the extracellular matrix. Functionally, has anti-angiogenic properties. This Homo sapiens (Human) protein is A disintegrin and metalloproteinase with thrombospondin motifs 8 (ADAMTS8).